Consider the following 288-residue polypeptide: ATP synthase gamma chain (288 aa).

This sequence belongs to the ATPase gamma chain family. As to quaternary structure, F-type ATPases have 2 components, CF(1) - the catalytic core - and CF(0) - the membrane proton channel. CF(1) has five subunits: alpha(3), beta(3), gamma(1), delta(1), epsilon(1). CF(0) has three main subunits: a, b and c.

It localises to the cell membrane. Its function is as follows. Produces ATP from ADP in the presence of a proton gradient across the membrane. The gamma chain is believed to be important in regulating ATPase activity and the flow of protons through the CF(0) complex. This is ATP synthase gamma chain from Shouchella clausii (strain KSM-K16) (Alkalihalobacillus clausii).